The following is a 368-amino-acid chain: ICEBs1 integrase (368 aa).

One can recognise a Core-binding (CB) domain in the interval 61–143 (VSFPTLISIY…SLSKIFDTAV (83 aa)). The 199-residue stretch at 164-362 (KKMKFWRPEE…YPNKQKEMAD (199 aa)) folds into the Tyr recombinase domain. Residues arginine 201, lysine 239, histidine 313, arginine 316, and histidine 339 contribute to the active site. The active-site O-(3'-phospho-DNA)-tyrosine intermediate is tyrosine 349.

Belongs to the 'phage' integrase family.

Its function is as follows. Putative integrase that is involved in the insertion of the integrative and conjugative element ICEBs1. Required for the excision of ICEBs1 from the donor cell genome and subsequent integration in the recipient cell genome. Appears not to be transferred through the mating pore. Integration of ICEBs1 involves an attachment site in the chromosome, attB, and a site in the circular form of ICEBs1, attICEBs1. In Bacillus subtilis (strain 168), this protein is ICEBs1 integrase (int).